A 213-amino-acid chain; its full sequence is BREX protein BrxA (213 aa).

It belongs to the BrxA family.

Functionally, BREX systems (bacteriophage exclusion) provide immunity against bacteriophage. A probably non-essential part of a type 1 BREX system which protects against dsDNA phage. This system allows phage adsorption but prevents phage DNA replication, without degradation of the phage DNA. Methylation of bacterial DNA by PglX guides self/non-self discrimination. When the brxA-brxB-brxC-pglX-pglZ-brxL genes are transformed into a susceptible E.coli strain (BW25113) they confer very high resistance to infection by bacteriophage VR7 and VpaE1, about 100-fold protection against lambda, T5 and T7 and no protection against RNA phage Qbeta, ssDNA phage M13 or dSDNA phage T4 and VR5. Glycosylated phage DNA is not susceptible to BREX. The BREX system does not confer resistance to lysogenic lambda phage, i.e. prophage that are integrated into the chromosomal DNA and then induced to form phage. The sequence is that of BREX protein BrxA from Escherichia coli O9:H4 (strain HS).